Here is a 246-residue protein sequence, read N- to C-terminus: 3'(2'),5'-bisphosphate nucleotidase CysQ (246 aa).

Residues Glu64, Asp83, Leu85, Asp86, and Asp205 each coordinate Mg(2+). Glu64 lines the substrate pocket. Residues 85-88 (LDGT) and Asp205 each bind substrate.

Belongs to the inositol monophosphatase superfamily. CysQ family. Requires Mg(2+) as cofactor.

It is found in the cell inner membrane. The enzyme catalyses adenosine 3',5'-bisphosphate + H2O = AMP + phosphate. Its function is as follows. Converts adenosine-3',5'-bisphosphate (PAP) to AMP. This Escherichia coli O157:H7 protein is 3'(2'),5'-bisphosphate nucleotidase CysQ.